A 300-amino-acid polypeptide reads, in one-letter code: uncharacterized protein (300 aa).

This is an uncharacterized protein from Methanocaldococcus jannaschii (strain ATCC 43067 / DSM 2661 / JAL-1 / JCM 10045 / NBRC 100440) (Methanococcus jannaschii).